We begin with the raw amino-acid sequence, 286 residues long: Cytochrome bo(3) ubiquinol oxidase subunit 2 (286 aa).

Positions 1–24 (MQFIKYKSYILKFLLVSCIFCING) are cleaved as a signal peptide. Residue Cys25 is the site of N-palmitoyl cysteine attachment. A lipid anchor (S-diacylglycerol cysteine) is attached at Cys25. The Extracellular portion of the chain corresponds to 25-44 (CDCTILCPNGLIAQEQRFVL). Residues 45–67 (FVSFFTMLLIIIPVIFMTIFFVL) traverse the membrane as a helical segment. Topologically, residues 68 to 85 (RYRESNFSKTYDPKWSHS) are cytoplasmic. Residues 86-108 (NIIELLIWGIPIIIIVFLSIFSW) traverse the membrane as a helical segment. Residues 109–286 (KSVHDLDPKK…VIANVLKISL (178 aa)) are Extracellular-facing.

It belongs to the cytochrome c oxidase subunit 2 family. As to quaternary structure, heterooctamer of two A chains, two B chains, two C chains and two D chains.

The protein localises to the cell membrane. Cytochrome bo(3) ubiquinol terminal oxidase is the component of the aerobic respiratory chain of E.coli that predominates when cells are grown at high aeration. Has proton pump activity across the membrane in addition to electron transfer, pumping 2 protons/electron. This Buchnera aphidicola subsp. Baizongia pistaciae (strain Bp) protein is Cytochrome bo(3) ubiquinol oxidase subunit 2 (cyoA).